The sequence spans 329 residues: MPEPGPRMNGFSLGELCWLFCCPPCPSRIAAKLAFLPPEPTYTVLAPEQRGAGASAPAPAQATAAAAAAQPAPQQPEEGAGAGPGACSLHLSERADWQYSQRELDAVEVFFSRTARDNRLGCMFVRCAPSSRYTLLFSHGNAVDLGQMCSFYIGLGSRINCNIFSYDYSGYGVSSGKPSEKNLYADIDAAWQALRTRYGVSPENIILYGQSIGTVPTVDLASRYECAAVILHSPLMSGLRVAFPDTRKTYCFDAFPSIDKISKVTSPVLVIHGTEDEVIDFSHGLAMYERCPRAVEPLWVEGAGHNDIELYAQYLERLKQFISHELPNS.

A compositionally biased stretch (low complexity) spans 53–79; it reads GASAPAPAQATAAAAAAQPAPQQPEEG. Positions 53-85 are disordered; sequence GASAPAPAQATAAAAAAQPAPQQPEEGAGAGPG. Catalysis depends on charge relay system residues serine 211, aspartate 276, and histidine 305.

It belongs to the AB hydrolase superfamily. ABHD17 family. Palmitoylated on cysteine residues located in a cysteine cluster at the N-terminus which promotes membrane localization. Palmitoylation is required for post-synaptic localization and for depalmitoylating activity towards DLG4/PSD95.

The protein localises to the recycling endosome membrane. It localises to the cell projection. Its subcellular location is the dendritic spine. It is found in the postsynaptic density membrane. The catalysed reaction is S-hexadecanoyl-L-cysteinyl-[protein] + H2O = L-cysteinyl-[protein] + hexadecanoate + H(+). With respect to regulation, inhibited by palmostatin-B. Functionally, hydrolyzes fatty acids from S-acylated cysteine residues in proteins. Has depalmitoylating activity towards NRAS and DLG4/PSD95. This chain is Alpha/beta hydrolase domain-containing protein 17C, found in Homo sapiens (Human).